The sequence spans 44 residues: Hyaluronidase CdtHya1 (44 aa).

It belongs to the glycosyl hydrolase 56 family. In terms of assembly, monomer. In terms of processing, contains disulfide bonds. Glycosylated. Expressed by the venom gland.

The protein resides in the secreted. It carries out the reaction Random hydrolysis of (1-&gt;4)-linkages between N-acetyl-beta-D-glucosamine and D-glucuronate residues in hyaluronate.. Its function is as follows. Snake venom endo-hyaluronidase that degrades hyaluronan to smaller oligosaccharide fragments. In venom, it is not toxic by itself, but increases the diffusion of other venom proteins such as crotoxin (a neurotoxic and myotoxic PLA2) by degrading the extracellular matrix. In addition, it displays antiedematogenic activity, since it significantly diminishes the oedematogenic activity of crotoxin (probably by direct substrate hydrolysis, since hyaluronan possesses strong water-binding capacity). This chain is Hyaluronidase CdtHya1, found in Crotalus durissus terrificus (South American rattlesnake).